The following is a 127-amino-acid chain: Large-conductance mechanosensitive channel (127 aa).

Helical transmembrane passes span 9 to 29, 32 to 52, and 75 to 95; these read EFAM…GVAF, IVTA…LGGV, and VIDF…INLL.

Belongs to the MscL family. As to quaternary structure, homopentamer.

Its subcellular location is the cell inner membrane. Its function is as follows. Channel that opens in response to stretch forces in the membrane lipid bilayer. May participate in the regulation of osmotic pressure changes within the cell. The polypeptide is Large-conductance mechanosensitive channel (Legionella pneumophila (strain Corby)).